Here is a 473-residue protein sequence, read N- to C-terminus: Keratin, type I cytoskeletal 16 (473 aa).

The head stretch occupies residues 1 to 116; that stretch reads MTTCSRQFTS…AGGDGLLVGS (116 aa). The segment at 117-152 is coil 1A; sequence EKVTMQNLNDRLASYLDKVRALEEANADLEVKIRDW. Residues 117–428 form the IF rod domain; that stretch reads EKVTMQNLND…RLLEGEDAHL (312 aa). The segment at 153 to 170 is linker 1; the sequence is YQRQRPSEIKDYSPYFKT. Residues 171 to 262 form a coil 1B region; it reads IEDLRNKIIA…KNHEEEMLAL (92 aa). The linker 12 stretch occupies residues 263-285; sequence RGQTGGDVNVEMDAAPGVDLSRI. The segment at 286-424 is coil 2; sequence LNEMRDQYEQ…ATYRRLLEGE (139 aa). The interval 425-473 is tail; sequence DAHLSSQQASGQSYSSREVFTSSSSSSSRQTRPILKEQSSSSFSQGQSS. Positions 428-473 are disordered; the sequence is LSSQQASGQSYSSREVFTSSSSSSSRQTRPILKEQSSSSFSQGQSS. Low complexity-rich tracts occupy residues 429-452 and 462-473; these read SSQQ…SSSS and QSSSSFSQGQSS.

Belongs to the intermediate filament family. Heterodimer of a type I and a type II keratin. KRT16 associates with KRT6 isomers (KRT6A or KRT6B). Interacts with TCHP. Interacts with TRADD. In terms of tissue distribution, expressed in the corneal epithelium (at protein level).

Functionally, epidermis-specific type I keratin that plays a key role in skin. Acts as a regulator of innate immunity in response to skin barrier breach: required for some inflammatory checkpoint for the skin barrier maintenance. This Homo sapiens (Human) protein is Keratin, type I cytoskeletal 16 (KRT16).